Consider the following 249-residue polypeptide: 1-(5-phosphoribosyl)-5-[(5-phosphoribosylamino)methylideneamino] imidazole-4-carboxamide isomerase (249 aa).

D8 (proton acceptor) is an active-site residue. D130 serves as the catalytic Proton donor.

Belongs to the HisA/HisF family.

The protein resides in the cytoplasm. It carries out the reaction 1-(5-phospho-beta-D-ribosyl)-5-[(5-phospho-beta-D-ribosylamino)methylideneamino]imidazole-4-carboxamide = 5-[(5-phospho-1-deoxy-D-ribulos-1-ylimino)methylamino]-1-(5-phospho-beta-D-ribosyl)imidazole-4-carboxamide. The protein operates within amino-acid biosynthesis; L-histidine biosynthesis; L-histidine from 5-phospho-alpha-D-ribose 1-diphosphate: step 4/9. In Nitrosococcus oceani (strain ATCC 19707 / BCRC 17464 / JCM 30415 / NCIMB 11848 / C-107), this protein is 1-(5-phosphoribosyl)-5-[(5-phosphoribosylamino)methylideneamino] imidazole-4-carboxamide isomerase.